Reading from the N-terminus, the 103-residue chain is Large ribosomal subunit protein uL24 (103 aa).

The protein belongs to the universal ribosomal protein uL24 family. In terms of assembly, part of the 50S ribosomal subunit.

Functionally, one of two assembly initiator proteins, it binds directly to the 5'-end of the 23S rRNA, where it nucleates assembly of the 50S subunit. One of the proteins that surrounds the polypeptide exit tunnel on the outside of the subunit. This chain is Large ribosomal subunit protein uL24, found in Pediococcus pentosaceus (strain ATCC 25745 / CCUG 21536 / LMG 10740 / 183-1w).